The chain runs to 105 residues: Thiosulfate sulfurtransferase GlpE (105 aa).

The region spanning 15 to 103 is the Rhodanese domain; the sequence is MQQGAILVDI…WCRAELPIDT (89 aa). Cys-63 serves as the catalytic Cysteine persulfide intermediate.

It belongs to the GlpE family.

It localises to the cytoplasm. The catalysed reaction is thiosulfate + hydrogen cyanide = thiocyanate + sulfite + 2 H(+). The enzyme catalyses thiosulfate + [thioredoxin]-dithiol = [thioredoxin]-disulfide + hydrogen sulfide + sulfite + 2 H(+). In terms of biological role, transferase that catalyzes the transfer of sulfur from thiosulfate to thiophilic acceptors such as cyanide or dithiols. May function in a CysM-independent thiosulfate assimilation pathway by catalyzing the conversion of thiosulfate to sulfite, which can then be used for L-cysteine biosynthesis. This Haemophilus influenzae (strain PittEE) protein is Thiosulfate sulfurtransferase GlpE.